The following is a 460-amino-acid chain: A-type ATP synthase subunit B 1 (460 aa).

The protein belongs to the ATPase alpha/beta chains family. Has multiple subunits with at least A(3), B(3), C, D, E, F, H, I and proteolipid K(x).

It localises to the cell membrane. In terms of biological role, component of the A-type ATP synthase that produces ATP from ADP in the presence of a proton gradient across the membrane. The B chain is a regulatory subunit. The protein is A-type ATP synthase subunit B 1 of Methanospirillum hungatei JF-1 (strain ATCC 27890 / DSM 864 / NBRC 100397 / JF-1).